The sequence spans 152 residues: MTLFIDGDALPNILKPILLRSVERLKIPTKVIANKKIHIGDSPCIEMIIVSQGADRADDMIIELLSPEDLVITADIPLADRVITAGGHAIDHRGTRYSSDNIKHYLAMRNLFESIRESGEITNGPKPFTQKDAHAFANQLSAFLQRLEKRKK.

The protein belongs to the UPF0178 family.

The sequence is that of UPF0178 protein NIS_0137 from Nitratiruptor sp. (strain SB155-2).